The chain runs to 471 residues: 3-isopropylmalate dehydratase large subunit (471 aa).

Residues cysteine 347, cysteine 407, and cysteine 410 each contribute to the [4Fe-4S] cluster site.

It belongs to the aconitase/IPM isomerase family. LeuC type 1 subfamily. Heterodimer of LeuC and LeuD. It depends on [4Fe-4S] cluster as a cofactor.

It carries out the reaction (2R,3S)-3-isopropylmalate = (2S)-2-isopropylmalate. Its pathway is amino-acid biosynthesis; L-leucine biosynthesis; L-leucine from 3-methyl-2-oxobutanoate: step 2/4. Catalyzes the isomerization between 2-isopropylmalate and 3-isopropylmalate, via the formation of 2-isopropylmaleate. The polypeptide is 3-isopropylmalate dehydratase large subunit (Geobacillus thermodenitrificans (strain NG80-2)).